A 310-amino-acid polypeptide reads, in one-letter code: N-acetyl-gamma-glutamyl-phosphate reductase (310 aa).

Cys117 is an active-site residue.

This sequence belongs to the NAGSA dehydrogenase family. Type 2 subfamily.

Its subcellular location is the cytoplasm. The catalysed reaction is N-acetyl-L-glutamate 5-semialdehyde + phosphate + NADP(+) = N-acetyl-L-glutamyl 5-phosphate + NADPH + H(+). The protein operates within amino-acid biosynthesis; L-arginine biosynthesis; N(2)-acetyl-L-ornithine from L-glutamate: step 3/4. Functionally, catalyzes the NADPH-dependent reduction of N-acetyl-5-glutamyl phosphate to yield N-acetyl-L-glutamate 5-semialdehyde. The polypeptide is N-acetyl-gamma-glutamyl-phosphate reductase (Rhizobium meliloti (strain 1021) (Ensifer meliloti)).